A 341-amino-acid polypeptide reads, in one-letter code: MEEAIRSLQQEISDFGIQSNKDLEAFRLKYTVRKGLIADLFGQLKTVAPDERPRIGQLLNTLKKNADEKQTAAEAVFSAQAARKAPALDLTLPGRRHYTGSEHPVQKVLGDMKQIFHAMGFSIATGPELELDRYNFDLLNFPPDHPARDMQDTFFITRGNPSGDVLLRTHTSPVQVRVMLDNPPPIRVICPGKVYRNEAISSRSYCVFHQLEGLYIDKNVSFADLKATIFSFARQMFGKDVKLRFRPSFFPFTEPSAEVDVTCYLCGGKGCRVCKKSGWLEIMGCGMVHPNVMRDCGIDPEVWSGYAFGMGVDRTVLLRYKIDDIRLLFENDIRMLRQFPA.

E254 contacts Mg(2+).

The protein belongs to the class-II aminoacyl-tRNA synthetase family. Phe-tRNA synthetase alpha subunit type 1 subfamily. Tetramer of two alpha and two beta subunits. Requires Mg(2+) as cofactor.

Its subcellular location is the cytoplasm. It carries out the reaction tRNA(Phe) + L-phenylalanine + ATP = L-phenylalanyl-tRNA(Phe) + AMP + diphosphate + H(+). This chain is Phenylalanine--tRNA ligase alpha subunit, found in Chlorobium limicola (strain DSM 245 / NBRC 103803 / 6330).